We begin with the raw amino-acid sequence, 260 residues long: Pectate lyase H (260 aa).

The first 17 residues, 1 to 17 (MFIKNGLLLSLATSVLA), serve as a signal peptide directing secretion.

Belongs to the polysaccharide lyase 3 family. Ca(2+) serves as cofactor.

Its subcellular location is the secreted. It catalyses the reaction Eliminative cleavage of (1-&gt;4)-alpha-D-galacturonan to give oligosaccharides with 4-deoxy-alpha-D-galact-4-enuronosyl groups at their non-reducing ends.. Pectinolytic enzyme consist of four classes of enzymes: pectin lyase, polygalacturonase, pectin methylesterase and rhamnogalacturonase. Among pectinolytic enzymes, pectin lyase is the most important in depolymerization of pectin, since it cleaves internal glycosidic bonds of highly methylated pectins. Favors pectate, the anion, over pectin, the methyl ester. In Emericella nidulans (strain FGSC A4 / ATCC 38163 / CBS 112.46 / NRRL 194 / M139) (Aspergillus nidulans), this protein is Pectate lyase H (plyH).